The primary structure comprises 359 residues: Pyruvate dehydrogenase E1 component subunit beta, mitochondrial (359 aa).

A mitochondrion-targeting transit peptide spans 1-30 (MAAVAGLVRGPLRQASGLLKRRFHRSAPAA). Position 67 is a phosphotyrosine (Y67). E89 contacts thiamine diphosphate. Residues I142, A190, I191, D193, and N195 each coordinate K(+). Residue K354 is modified to N6-acetyllysine.

In terms of assembly, heterotetramer of two PDHA1 and two PDHB subunits. The heterotetramer interacts with DLAT, and is part of the multimeric pyruvate dehydrogenase complex that contains multiple copies of pyruvate dehydrogenase (E1), dihydrolipoamide acetyltransferase (DLAT, E2) and lipoamide dehydrogenase (DLD, E3). These subunits are bound to an inner core composed of about 48 DLAT and 12 PDHX molecules. Interacts with DLAT. The cofactor is thiamine diphosphate.

The protein resides in the mitochondrion matrix. It carries out the reaction N(6)-[(R)-lipoyl]-L-lysyl-[protein] + pyruvate + H(+) = N(6)-[(R)-S(8)-acetyldihydrolipoyl]-L-lysyl-[protein] + CO2. In terms of biological role, the pyruvate dehydrogenase complex catalyzes the overall conversion of pyruvate to acetyl-CoA and CO(2), and thereby links the glycolytic pathway to the tricarboxylic cycle. The protein is Pyruvate dehydrogenase E1 component subunit beta, mitochondrial (Pdhb) of Rattus norvegicus (Rat).